A 404-amino-acid polypeptide reads, in one-letter code: MKLPIYLDYAATCPVDERVAKKMMAFLTIDGTFGNPASRSHKFGWQAEEAVDIARNQIADLIGADSREIVFTSGATESDNLAIKGAAHFYQTKGKHILTCKTEHKAVLDTCRQLEREGFEVTYLSPEADGLIDLEKFKAALRPDTILASIMHANNEIGVLQDIKAIGELCRANKTIFHVDATQSVGKVEINLEELAVDLMSMSSHKLYGPKGVGALYVRRKPRVRLEAIIHGGGHERGMRSGTLPVHQIVGMGEAYRIAKEEMASEMPRLKALRDRLYNGLKDIEETYVNGSMEHRLDSNLNISFNYVEGESLMMALRDIAVSSGSACTSASLEPSYVLRALGLNDELAHSSIRFTLGRYTTEEEIDYTINLMKGAVEKLRALSPLWDMFKEGIDLNTIEWSAH.

Residues 75-76, N155, Q183, and 203-205 each bind pyridoxal 5'-phosphate; these read AT and SSH. Position 206 is an N6-(pyridoxal phosphate)lysine (K206). T243 contributes to the pyridoxal 5'-phosphate binding site. The active-site Cysteine persulfide intermediate is the C328. C328 contributes to the [2Fe-2S] cluster binding site.

It belongs to the class-V pyridoxal-phosphate-dependent aminotransferase family. NifS/IscS subfamily. In terms of assembly, homodimer. Forms a heterotetramer with IscU, interacts with other sulfur acceptors. Pyridoxal 5'-phosphate is required as a cofactor.

It localises to the cytoplasm. The enzyme catalyses (sulfur carrier)-H + L-cysteine = (sulfur carrier)-SH + L-alanine. It participates in cofactor biosynthesis; iron-sulfur cluster biosynthesis. Functionally, master enzyme that delivers sulfur to a number of partners involved in Fe-S cluster assembly, tRNA modification or cofactor biosynthesis. Catalyzes the removal of elemental sulfur atoms from cysteine to produce alanine. Functions as a sulfur delivery protein for Fe-S cluster synthesis onto IscU, an Fe-S scaffold assembly protein, as well as other S acceptor proteins. This Haemophilus influenzae (strain PittEE) protein is Cysteine desulfurase IscS.